The following is a 51-amino-acid chain: MRELIRLVSSAGTGHFYTTDKNKRTKPEKIEIKKYDPVVRQHVIYKEAKIK.

It belongs to the bacterial ribosomal protein bL33 family. In terms of assembly, part of the 50S ribosomal subunit. Cross-links to the P and E site tRNAs.

The sequence is that of Large ribosomal subunit protein bL33 from Pseudomonas aeruginosa (strain ATCC 15692 / DSM 22644 / CIP 104116 / JCM 14847 / LMG 12228 / 1C / PRS 101 / PAO1).